We begin with the raw amino-acid sequence, 315 residues long: Bifunctional pinoresinol-lariciresinol reductase (315 aa).

Residues 14–20 (GGTGYLG), Arg39, and Lys48 contribute to the NADP(+) site. The active-site Proton acceptor is Lys142. Residue Arg146 participates in NADP(+) binding. His274 lines the substrate pocket.

This sequence belongs to the NmrA-type oxidoreductase family. Isoflavone reductase subfamily. As to quaternary structure, dimer.

The catalysed reaction is (+)-lariciresinol + NADP(+) = (+)-pinoresinol + NADPH + H(+). It carries out the reaction (-)-secoisolariciresinol + NADP(+) = (+)-lariciresinol + NADPH + H(+). Its function is as follows. Reductase involved in lignan (-)-hinokinin biosynthesis. Catalyzes the enantioselective conversion of (+)-pinoresinol into (+)-lariciresinol and of (+)-lariciresinol into (-)-secoisolariciresinol. Abstracts the 4R-hydride from the NADPH cofactor during catalysis. Has also a low phenylcoumaran benzylic ether reductase activity. The polypeptide is Bifunctional pinoresinol-lariciresinol reductase (PLR_Lc1) (Linum corymbulosum (Linum)).